The chain runs to 307 residues: Aspartate carbamoyltransferase catalytic subunit (307 aa).

The carbamoyl phosphate site is built by arginine 54 and threonine 55. An L-aspartate-binding site is contributed by lysine 83. 3 residues coordinate carbamoyl phosphate: arginine 104, histidine 132, and glutamine 135. L-aspartate-binding residues include arginine 165 and arginine 228. Residues leucine 267 and proline 268 each coordinate carbamoyl phosphate.

The protein belongs to the aspartate/ornithine carbamoyltransferase superfamily. ATCase family. Heterododecamer (2C3:3R2) of six catalytic PyrB chains organized as two trimers (C3), and six regulatory PyrI chains organized as three dimers (R2).

It carries out the reaction carbamoyl phosphate + L-aspartate = N-carbamoyl-L-aspartate + phosphate + H(+). It functions in the pathway pyrimidine metabolism; UMP biosynthesis via de novo pathway; (S)-dihydroorotate from bicarbonate: step 2/3. Its function is as follows. Catalyzes the condensation of carbamoyl phosphate and aspartate to form carbamoyl aspartate and inorganic phosphate, the committed step in the de novo pyrimidine nucleotide biosynthesis pathway. The polypeptide is Aspartate carbamoyltransferase catalytic subunit (Clostridium botulinum (strain Loch Maree / Type A3)).